Reading from the N-terminus, the 361-residue chain is MATPAVPVSAPPATPAPVPAAAPVSAPASVPAPTPAPAAAPVPAAAPASSSDPAAAAATTAAPGQTPASAQAPAQTPAPALPGPALPGPFPGGRVVRLHPVILASIVDSYERRNEGAARVIGTLLGTVDKHSVEVTNCFSVPHNESEDEVAVDMEFAKNMYELHKKVSPNELILGWYATGHDITEHSVLIHEYYSREAPNPIHLTVDTSLQNGRMSIKAYVSTLMGVPGRTMGVMFTPLTVKYAYYDTERIGVDLIMKTCFSPNRVIGLSSDLQQVGGASARIQDALSTVLQYAEDVLSGKVSADNTVGRFLMSLVNQVPKIVPDDFETMLNSNINDLLMVTYLANLTQSQIALNEKLVNL.

The interval 1–86 (MATPAVPVSA…PAPALPGPAL (86 aa)) is disordered. Residue alanine 2 is modified to N-acetylalanine. 2 stretches are compositionally biased toward pro residues: residues 9 to 20 (SAPPATPAPVPA) and 30 to 40 (VPAPTPAPAAA). Residues 41 to 78 (PVPAAAPASSSDPAAAAATTAAPGQTPASAQAPAQTPA) are compositionally biased toward low complexity. Serine 50 bears the Phosphoserine; by CDK11; in vitro mark. The 131-residue stretch at 96–226 (VRLHPVILAS…IKAYVSTLMG (131 aa)) folds into the MPN domain. Lysine 242 carries the N6-acetyllysine modification. Serine 262 is modified (phosphoserine).

It belongs to the eIF-3 subunit F family. As to quaternary structure, component of the eukaryotic translation initiation factor 3 (eIF-3) complex, which is composed of 13 subunits: EIF3A, EIF3B, EIF3C, EIF3D, EIF3E, EIF3F, EIF3G, EIF3H, EIF3I, EIF3J, EIF3K, EIF3L and EIF3M. The eIF-3 complex appears to include 3 stable modules: module A is composed of EIF3A, EIF3B, EIF3G and EIF3I; module B is composed of EIF3F, EIF3H, and EIF3M; and module C is composed of EIF3C, EIF3D, EIF3E, EIF3K and EIF3L. EIF3C of module C binds EIF3B of module A and EIF3H of module B, thereby linking the three modules. EIF3J is a labile subunit that binds to the eIF-3 complex via EIF3B. The eIF-3 complex interacts with RPS6KB1 under conditions of nutrient depletion. Mitogenic stimulation leads to binding and activation of a complex composed of MTOR and RPTOR, leading to phosphorylation and release of RPS6KB1 and binding of EIF4B to eIF-3. Interacts with RNF139; the interaction leads to protein translation inhibitions in a ubiquitination-dependent manner. Interacts with DTX1, the interaction is required for deubiquitinating activity towards NOTCH1. In terms of processing, phosphorylation is enhanced upon serum stimulation. Phosphorylated during apoptosis by caspase-processed CDK11.

The protein resides in the cytoplasm. It catalyses the reaction Thiol-dependent hydrolysis of ester, thioester, amide, peptide and isopeptide bonds formed by the C-terminal Gly of ubiquitin (a 76-residue protein attached to proteins as an intracellular targeting signal).. Its function is as follows. Component of the eukaryotic translation initiation factor 3 (eIF-3) complex, which is required for several steps in the initiation of protein synthesis. The eIF-3 complex associates with the 40S ribosome and facilitates the recruitment of eIF-1, eIF-1A, eIF-2:GTP:methionyl-tRNAi and eIF-5 to form the 43S pre-initiation complex (43S PIC). The eIF-3 complex stimulates mRNA recruitment to the 43S PIC and scanning of the mRNA for AUG recognition. The eIF-3 complex is also required for disassembly and recycling of post-termination ribosomal complexes and subsequently prevents premature joining of the 40S and 60S ribosomal subunits prior to initiation. The eIF-3 complex specifically targets and initiates translation of a subset of mRNAs involved in cell proliferation, including cell cycling, differentiation and apoptosis, and uses different modes of RNA stem-loop binding to exert either translational activation or repression. Functionally, deubiquitinates activated NOTCH1, promoting its nuclear import, thereby acting as a positive regulator of Notch signaling. This chain is Eukaryotic translation initiation factor 3 subunit F, found in Pan troglodytes (Chimpanzee).